Reading from the N-terminus, the 162-residue chain is Nucleotide-binding protein CHU_2278 (162 aa).

Belongs to the YajQ family.

In terms of biological role, nucleotide-binding protein. The protein is Nucleotide-binding protein CHU_2278 of Cytophaga hutchinsonii (strain ATCC 33406 / DSM 1761 / CIP 103989 / NBRC 15051 / NCIMB 9469 / D465).